Here is a 193-residue protein sequence, read N- to C-terminus: MNFLAHLHLATLADSSLLGNLLADFVRGNPQGEYSPEIVAGIMMHRRVDVMTDTLPLVKEARGYFSADYRRVAPITLDVLWDHFLSRNWDKLMPDCSLPDFIEHAQCQILPHLPLTPARFQNLNAYLWPERWLERYAELPFIADVLQGMANRRPKLAALAGSFHDIEQHYQPLEQLFWAFYPAMMSQAQDKQI.

Belongs to the AcpH family.

It catalyses the reaction holo-[ACP] + H2O = apo-[ACP] + (R)-4'-phosphopantetheine + H(+). In terms of biological role, converts holo-ACP to apo-ACP by hydrolytic cleavage of the phosphopantetheine prosthetic group from ACP. This is Acyl carrier protein phosphodiesterase from Yersinia enterocolitica serotype O:8 / biotype 1B (strain NCTC 13174 / 8081).